The sequence spans 429 residues: Histidine--tRNA ligase (429 aa).

Belongs to the class-II aminoacyl-tRNA synthetase family. In terms of assembly, homodimer.

It is found in the cytoplasm. It catalyses the reaction tRNA(His) + L-histidine + ATP = L-histidyl-tRNA(His) + AMP + diphosphate + H(+). The polypeptide is Histidine--tRNA ligase (Streptococcus pneumoniae (strain Hungary19A-6)).